The sequence spans 354 residues: Diaminopimelate epimerase, chloroplastic (354 aa).

The transit peptide at 1–44 (MSSATAAATATIAAAAAKLAATPAPAPSRRRLTLRGNPTARRCV) directs the protein to the chloroplast. Catalysis depends on residues Cys142 and Cys297.

This sequence belongs to the diaminopimelate epimerase family.

The protein resides in the plastid. The protein localises to the chloroplast. The enzyme catalyses (2S,6S)-2,6-diaminopimelate = meso-2,6-diaminopimelate. The protein operates within amino-acid biosynthesis; L-lysine biosynthesis via DAP pathway; DL-2,6-diaminopimelate from LL-2,6-diaminopimelate: step 1/1. The chain is Diaminopimelate epimerase, chloroplastic (DAPF) from Oryza sativa subsp. japonica (Rice).